A 429-amino-acid polypeptide reads, in one-letter code: 3-phosphoshikimate 1-carboxyvinyltransferase (429 aa).

The 3-phosphoshikimate site is built by Lys-22, Ser-23, and Arg-27. Lys-22 contacts phosphoenolpyruvate. The phosphoenolpyruvate site is built by Gly-94 and Arg-122. Residues Ser-167, Gln-169, Asp-315, and Lys-342 each coordinate 3-phosphoshikimate. Residue Gln-169 coordinates phosphoenolpyruvate. The Proton acceptor role is filled by Asp-315. Phosphoenolpyruvate-binding residues include Arg-346 and Arg-388.

Belongs to the EPSP synthase family. In terms of assembly, monomer.

It localises to the cytoplasm. It carries out the reaction 3-phosphoshikimate + phosphoenolpyruvate = 5-O-(1-carboxyvinyl)-3-phosphoshikimate + phosphate. It functions in the pathway metabolic intermediate biosynthesis; chorismate biosynthesis; chorismate from D-erythrose 4-phosphate and phosphoenolpyruvate: step 6/7. Functionally, catalyzes the transfer of the enolpyruvyl moiety of phosphoenolpyruvate (PEP) to the 5-hydroxyl of shikimate-3-phosphate (S3P) to produce enolpyruvyl shikimate-3-phosphate and inorganic phosphate. The protein is 3-phosphoshikimate 1-carboxyvinyltransferase of Geobacter sulfurreducens (strain ATCC 51573 / DSM 12127 / PCA).